The following is a 237-amino-acid chain: H/ACA ribonucleoprotein complex subunit 1 (237 aa).

Gly residues-rich tracts occupy residues 1-59 (MGFG…GGRG) and 172-237 (RGGG…RGRW). 2 disordered regions span residues 1–64 (MGFG…FDTG) and 157–237 (KPPQ…RGRW). RGG-box regions lie at residues 4–56 (GKPR…GRGG) and 166–236 (KAFT…GRGR).

The protein belongs to the GAR1 family. Component of the box H/ACA small nucleolar ribonucleoprotein (H/ACA snoRNP) complex consisting of Nop60B, Gar1, NPH2 and Nop10, and associated with H/ACA-type snoRNAs.

The protein resides in the nucleus. It localises to the nucleolus. Functionally, component of the box H/ACA small nucleolar ribonucleoprotein (H/ACA snoRNP) complex, which catalyzes pseudouridylation of rRNA. This involves the isomerization of uridine such that the ribose is subsequently attached to C5, instead of the normal N1. Pseudouridine ('psi') residues may serve to stabilize the conformation of rRNAs. Required for ribosome biogenesis. H/ACA snoRNP complex-dependent ribosome biogenesis is important in female germline cell differentiation during oogenesis. In Drosophila melanogaster (Fruit fly), this protein is H/ACA ribonucleoprotein complex subunit 1.